A 198-amino-acid polypeptide reads, in one-letter code: Patulin synthesis protein F (198 aa).

The signal sequence occupies residues Met-1 to Ala-18. N-linked (GlcNAc...) asparagine glycans are attached at residues Asn-128 and Asn-184.

It belongs to the patF family.

Its subcellular location is the cytoplasm. The protein resides in the cytosol. The enzyme catalyses phyllostine = neopatulin. The protein operates within mycotoxin biosynthesis; patulin biosynthesis. In terms of biological role, part of the gene cluster that mediates the biosynthesis of patulin, an acetate-derived tetraketide mycotoxin produced by several fungal species that shows antimicrobial properties against several bacteria. PatF catalyzes the conversion of phyllostine into neopatulin. The pathway begins with the synthesis of 6-methylsalicylic acid by the polyketide synthase (PKS) patK via condensation of acetate and malonate units. The 6-methylsalicylic acid decarboxylase patG then catalyzes the decarboxylation of 6-methylsalicylic acid to yield m-cresol (also known as 3-methylphenol). These first reactions occur in the cytosol. The intermediate m-cresol is then transported into the endoplasmic reticulum where the cytochrome P450 monooxygenase patH converts it to m-hydroxybenzyl alcohol, which is further converted to gentisyl alcohol by the cytochrome P450 monooxygenase patI. The oxidoreductases patJ and patO further convert gentisyl alcohol to isoepoxydon in the vacuole. PatN catalyzes then the transformation of isoepoxydon into phyllostine. The cluster protein patF is responsible for the conversion from phyllostine to neopatulin whereas the alcohol dehydrogenase patD converts neopatulin to E-ascladiol. The steps between isoepoxydon and E-ascladiol occur in the cytosol, and E-ascladiol is probably secreted to the extracellular space by one of the cluster-specific transporters patC or patM. Finally, the secreted patulin synthase patE catalyzes the conversion of E-ascladiol to patulin. In Aspergillus clavatus (strain ATCC 1007 / CBS 513.65 / DSM 816 / NCTC 3887 / NRRL 1 / QM 1276 / 107), this protein is Patulin synthesis protein F.